The chain runs to 308 residues: ADP-L-glycero-D-manno-heptose-6-epimerase (308 aa).

Residues 10–11 (MI), 31–32 (DN), K38, K53, 75–79 (EGACS), and N92 contribute to the NADP(+) site. Y140 functions as the Proton acceptor in the catalytic mechanism. Residue K144 participates in NADP(+) binding. A substrate-binding site is contributed by N169. The NADP(+) site is built by V170 and K178. K178 acts as the Proton acceptor in catalysis. Substrate-binding positions include S180, H187, 201 to 204 (FEGS), R209, and Y272.

Belongs to the NAD(P)-dependent epimerase/dehydratase family. HldD subfamily. In terms of assembly, homopentamer. It depends on NADP(+) as a cofactor.

It catalyses the reaction ADP-D-glycero-beta-D-manno-heptose = ADP-L-glycero-beta-D-manno-heptose. The protein operates within nucleotide-sugar biosynthesis; ADP-L-glycero-beta-D-manno-heptose biosynthesis; ADP-L-glycero-beta-D-manno-heptose from D-glycero-beta-D-manno-heptose 7-phosphate: step 4/4. Functionally, catalyzes the interconversion between ADP-D-glycero-beta-D-manno-heptose and ADP-L-glycero-beta-D-manno-heptose via an epimerization at carbon 6 of the heptose. This Actinobacillus pleuropneumoniae serotype 5b (strain L20) protein is ADP-L-glycero-D-manno-heptose-6-epimerase.